The sequence spans 138 residues: Large ribosomal subunit protein bL17 (138 aa).

The protein belongs to the bacterial ribosomal protein bL17 family. Part of the 50S ribosomal subunit. Contacts protein L32.

The polypeptide is Large ribosomal subunit protein bL17 (Solidesulfovibrio magneticus (strain ATCC 700980 / DSM 13731 / RS-1) (Desulfovibrio magneticus)).